Here is a 411-residue protein sequence, read N- to C-terminus: MTSPIHVNSEIGKLKTVLLKRPGKEVENITPDIMYRLLFDDIPYLPTIQKEHDQFAQTLRDNGVEVLYLENLAAEAIDAGDVKEAFLDKMLNESHIKSPQVQAALKDYLISMATLDMVEKIMAGVRTNEIDIKSKALIDVSADGDYPFYMDPMPNLYFTRDPAASMGDGLTINKMTFEARQRESMFMEVIMQHHPRFANQGAQVWRDRDHIDRMEGGDELILSDKVLAIGISQRTSAQSIEELAKVLFANHSGFEKILAIKIPHNHAMMHLDTVFTMIDYDKFTIHPGIQGAGGMVDTYILEPGNNDEIKITHQTDLEKVLRDALEVPELTLIPCGGGDAVVAPREQWNDGSNTLAIAPGVVVTYDRNYVSNENLRQYGIKVIEVPSSELSRGRGGPRCMSMPLVREDLKK.

Cys-399 serves as the catalytic Amidino-cysteine intermediate.

It belongs to the arginine deiminase family.

It is found in the cytoplasm. It carries out the reaction L-arginine + H2O = L-citrulline + NH4(+). It participates in amino-acid degradation; L-arginine degradation via ADI pathway; carbamoyl phosphate from L-arginine: step 1/2. This is Arginine deiminase from Latilactobacillus sakei subsp. sakei (strain 23K) (Lactobacillus sakei subsp. sakei).